Reading from the N-terminus, the 88-residue chain is Translation initiation factor IF-1 1 (88 aa).

The S1-like domain maps to 1-72 (MAKEELIELD…TKGRINFRHK (72 aa)).

It belongs to the IF-1 family. In terms of assembly, component of the 30S ribosomal translation pre-initiation complex which assembles on the 30S ribosome in the order IF-2 and IF-3, IF-1 and N-formylmethionyl-tRNA(fMet); mRNA recruitment can occur at any time during PIC assembly.

It is found in the cytoplasm. Its function is as follows. One of the essential components for the initiation of protein synthesis. Stabilizes the binding of IF-2 and IF-3 on the 30S subunit to which N-formylmethionyl-tRNA(fMet) subsequently binds. Helps modulate mRNA selection, yielding the 30S pre-initiation complex (PIC). Upon addition of the 50S ribosomal subunit IF-1, IF-2 and IF-3 are released leaving the mature 70S translation initiation complex. This Burkholderia mallei (strain ATCC 23344) protein is Translation initiation factor IF-1 1.